The chain runs to 262 residues: Zinc finger protein 138 (262 aa).

Residues 110-132 (FRCKECDKSLCMLSRLTQHKKIH) form a C2H2-type 1 zinc finger. The segment at 138–160 (YKCEECGKTFNWSTNLSKPKKIH) adopts a C2H2-type 2; degenerate zinc-finger fold. The segment at 166-188 (YKCEVCGKAFHQSSILTKHKIIR) adopts a C2H2-type 3; degenerate zinc-finger fold. A C2H2-type 4 zinc finger spans residues 194–216 (YKCAHCGKAFKQSSHLTRHKIIH). The C2H2-type 5; degenerate zinc finger occupies 222–244 (YKCEQCGKVFKQSPTLTKHQIIY). The segment at 250 to 262 (YKCEECGKAFNLS) adopts a C2H2-type 6; degenerate zinc-finger fold.

Belongs to the krueppel C2H2-type zinc-finger protein family.

The protein resides in the nucleus. Functionally, may be involved in transcriptional regulation as a repressor. The protein is Zinc finger protein 138 (ZNF138) of Homo sapiens (Human).